A 213-amino-acid polypeptide reads, in one-letter code: Large ribosomal subunit protein uL1 (213 aa).

Belongs to the universal ribosomal protein uL1 family. As to quaternary structure, part of the 50S ribosomal subunit.

In terms of biological role, binds directly to 23S rRNA. Probably involved in E site tRNA release. Protein L1 is also a translational repressor protein, it controls the translation of its operon by binding to its mRNA. The chain is Large ribosomal subunit protein uL1 from Methanococcus maripaludis (strain C6 / ATCC BAA-1332).